The following is a 523-amino-acid chain: Transmembrane protein 266 (523 aa).

Over 1-94 (MTNPQPAIEG…VFLLSASLNS (94 aa)) the chain is Cytoplasmic. The helical transmembrane segment at 95 to 115 (FLVACVILVVILLTLELLIDI) threads the bilayer. Residues 116 to 121 (KLLQFS) lie on the Extracellular side of the membrane. Residues 122–142 (SAFQFAGVIHWISLVILSVFF) traverse the membrane as a helical segment. Residues 143-161 (SETVLRIVVLGIWDYIENK) lie on the Cytoplasmic side of the membrane. Residues 162–182 (IEVFDGAVIILSLAPMVASTV) traverse the membrane as a helical segment. The Extracellular segment spans residues 183–191 (ANGPRSPWD). A helical transmembrane segment spans residues 192–212 (AISLIIMLRIWRVKRVIDAYV). Residues 213-523 (LPVKLEMEMV…EQKLHRVPEA (311 aa)) lie on the Cytoplasmic side of the membrane. Positions 218–270 (EMEMVIQQYEKAKVIQDEQLERLTQICQEQGFEIRQLRAHLAQQDLDLAAERE) form a coiled coil. The tract at residues 380–477 (SASRSSVTRA…PELEHRVSLF (98 aa)) is disordered. Low complexity predominate over residues 382 to 397 (SRSSVTRAQSDSSQTL). Residues 398–411 (GSSMDCSTAREEPS) are compositionally biased toward polar residues. Residues 421-430 (LPSQQQVEEA) are compositionally biased toward pro residues.

In terms of assembly, homodimer; disulfide-linked. As to expression, mainly expressed in the cerebellum. Also expressed in cerebral cortex, skeletal muscle and thyroid, but at much lower levels.

The protein localises to the cell membrane. The protein resides in the cell projection. It localises to the dendrite. Its subcellular location is the perikaryon. In terms of biological role, voltage-sensor protein present on the post-synaptic side of glutamatergic mossy fibers and granule cells in the cerebellum. Despite the presence of a voltage-sensor segment, does not form a functional ion channel and its precise role remains unclear. Undergoes both rapid and slow structural rearrangements in response to changes in voltage. Contains a zinc-binding site that can regulate the slow conformational transition. This is Transmembrane protein 266 from Homo sapiens (Human).